The chain runs to 191 residues: MLLSDKDIRAEIDNGRVRIDPFDDSMVQPSSIDVRLDRYFRVFENHRYPHIDPSVEQVDLTRLVEPEGDEPFILHPGEFVLASTYEVVSLPDDLASRLEGKSSLGRLGLVTHSTAGFIDPGFSGHVTLELSNLATLPIKLWPGMKIGQLCLFRLTSPAEHPYGSERYGSRYQGQRGPTASRSFLNFHRTQV.

Residues 101 to 106, D119, 127 to 129, Q148, Y162, and Q174 contribute to the dCTP site; these read KSSLGR and TLE. The Proton donor/acceptor role is filled by E129.

Belongs to the dCTP deaminase family. Homotrimer.

It carries out the reaction dCTP + 2 H2O = dUMP + NH4(+) + diphosphate. Its pathway is pyrimidine metabolism; dUMP biosynthesis; dUMP from dCTP: step 1/1. In terms of biological role, bifunctional enzyme that catalyzes both the deamination of dCTP to dUTP and the hydrolysis of dUTP to dUMP without releasing the toxic dUTP intermediate. This is dCTP deaminase, dUMP-forming from Streptomyces coelicolor (strain ATCC BAA-471 / A3(2) / M145).